Reading from the N-terminus, the 319-residue chain is Protein-methionine-sulfoxide reductase catalytic subunit MsrP (319 aa).

The segment at residues 1–54 (MSSFKPSRFSTARLTGDAVTPKSIYLRRREFMIGLGAIAATGAASSAFADPLEA) is a signal peptide (tat-type signal). Residues Asn75, 78–79 (YE), Cys133, Asn218, Arg223, and 234–236 (GIK) contribute to the Mo-molybdopterin site.

The protein belongs to the MsrP family. Heterodimer of a catalytic subunit (MsrP) and a heme-binding subunit (MsrQ). The cofactor is Mo-molybdopterin. Post-translationally, predicted to be exported by the Tat system. The position of the signal peptide cleavage has not been experimentally proven.

Its subcellular location is the periplasm. The catalysed reaction is L-methionyl-[protein] + a quinone + H2O = L-methionyl-(S)-S-oxide-[protein] + a quinol. The enzyme catalyses L-methionyl-[protein] + a quinone + H2O = L-methionyl-(R)-S-oxide-[protein] + a quinol. Its function is as follows. Part of the MsrPQ system that repairs oxidized periplasmic proteins containing methionine sulfoxide residues (Met-O), using respiratory chain electrons. Thus protects these proteins from oxidative-stress damage caused by reactive species of oxygen and chlorine generated by the host defense mechanisms. MsrPQ is essential for the maintenance of envelope integrity under bleach stress, rescuing a wide series of structurally unrelated periplasmic proteins from methionine oxidation. The catalytic subunit MsrP is non-stereospecific, being able to reduce both (R-) and (S-) diastereoisomers of methionine sulfoxide. The chain is Protein-methionine-sulfoxide reductase catalytic subunit MsrP from Brucella melitensis biotype 1 (strain ATCC 23456 / CCUG 17765 / NCTC 10094 / 16M).